A 216-amino-acid polypeptide reads, in one-letter code: Transmembrane emp24 domain-containing protein eca (216 aa).

Residues M1–G20 form the signal peptide. Topologically, residues L21–S182 are lumenal. Positions R30–V126 constitute a GOLD domain. Residues A134–N164 are a coiled coil. The chain crosses the membrane as a helical span at residues R183–M203. Topologically, residues R204–V216 are cytoplasmic. The Prevents secretion from ER signature appears at K213–V216.

This sequence belongs to the EMP24/GP25L family.

The protein resides in the endoplasmic reticulum membrane. Eca and bai are essential, though not redundant, for dorsoventral patterning of the embryo. Specifically required during early embryogenesis for the activity of maternal tkv, while the zygotic tkv is not affected. Involved in Golgi organization. This Drosophila pseudoobscura pseudoobscura (Fruit fly) protein is Transmembrane emp24 domain-containing protein eca.